We begin with the raw amino-acid sequence, 631 residues long: Phosphomethylpyrimidine synthase (631 aa).

Residues N239, M268, Y297, H333, 353–355, 394–397, and E433 contribute to the substrate site; these read SRG and DGLR. H437 is a Zn(2+) binding site. Y460 serves as a coordination point for substrate. H501 is a binding site for Zn(2+). C581, C584, and C589 together coordinate [4Fe-4S] cluster.

Belongs to the ThiC family. In terms of assembly, homodimer. [4Fe-4S] cluster is required as a cofactor.

The catalysed reaction is 5-amino-1-(5-phospho-beta-D-ribosyl)imidazole + S-adenosyl-L-methionine = 4-amino-2-methyl-5-(phosphooxymethyl)pyrimidine + CO + 5'-deoxyadenosine + formate + L-methionine + 3 H(+). The protein operates within cofactor biosynthesis; thiamine diphosphate biosynthesis. Its function is as follows. Catalyzes the synthesis of the hydroxymethylpyrimidine phosphate (HMP-P) moiety of thiamine from aminoimidazole ribotide (AIR) in a radical S-adenosyl-L-methionine (SAM)-dependent reaction. In Salmonella paratyphi C (strain RKS4594), this protein is Phosphomethylpyrimidine synthase.